The following is a 1032-amino-acid chain: Probable LRR receptor-like serine/threonine-protein kinase At1g56130 (1032 aa).

Residues 1–29 (MTRIRRSPCLLLLIIWFMCIAGSVQVVQS) form the signal peptide. The Extracellular portion of the chain corresponds to 30-636 (QNQTGATTHP…PPSKGKNRTG (607 aa)). Asparagine 31, asparagine 61, and asparagine 95 each carry an N-linked (GlcNAc...) asparagine glycan. LRR repeat units follow at residues 101–122 (ITNI…LWTL), 123–146 (TYLT…IGNL), 148–170 (RMQW…IGLL), 171–194 (TDLR…IGRC), 196–217 (KLQQ…SFAN), 242–265 (WTKL…SFSN), 290–314 (MKSL…IGEH), 315–338 (SSLR…LFNL), 340–360 (QLTH…TQKT), and 361–385 (QSLR…SLPS). N-linked (GlcNAc...) asparagine glycosylation is present at asparagine 145. Asparagine 182 carries an N-linked (GlcNAc...) asparagine glycan. N-linked (GlcNAc...) asparagine glycosylation is found at asparagine 265, asparagine 302, asparagine 337, asparagine 348, and asparagine 352. Asparagine 394, asparagine 580, and asparagine 633 each carry an N-linked (GlcNAc...) asparagine glycan. A helical transmembrane segment spans residues 637–657 (TIVGVIVGVGLLSILAGVVMF). The Cytoplasmic portion of the chain corresponds to 658–1032 (TIRKRRKRYT…MLGSKINEGR (375 aa)). At threonine 683 the chain carries Phosphothreonine. The region spanning 694–968 (FDPSNKLGEG…VAMLSGDVEI (275 aa)) is the Protein kinase domain. Residues 700-708 (LGEGGFGPV) and lysine 722 contribute to the ATP site. Residue tyrosine 767 is modified to Phosphotyrosine. Aspartate 818 (proton acceptor) is an active-site residue. Phosphoserine occurs at positions 822 and 851. Residues threonine 852 and threonine 857 each carry the phosphothreonine modification. At tyrosine 865 the chain carries Phosphotyrosine. The segment at 1008-1032 (APGSEISPRDSDFKPMLGSKINEGR) is disordered.

It belongs to the protein kinase superfamily. Ser/Thr protein kinase family.

The protein resides in the cell membrane. The catalysed reaction is L-seryl-[protein] + ATP = O-phospho-L-seryl-[protein] + ADP + H(+). The enzyme catalyses L-threonyl-[protein] + ATP = O-phospho-L-threonyl-[protein] + ADP + H(+). This chain is Probable LRR receptor-like serine/threonine-protein kinase At1g56130, found in Arabidopsis thaliana (Mouse-ear cress).